Reading from the N-terminus, the 348-residue chain is Histone PARylation factor 1 (348 aa).

The segment covering 1–10 has biased composition (basic residues); sequence MAGRGKRKPR. A disordered region spans residues 1–38; the sequence is MAGRGKRKPRSLPQTETPNGEVKKAKEGLKDDKTSVGE. Basic and acidic residues predominate over residues 21–38; that stretch reads EVKKAKEGLKDDKTSVGE. A coiled-coil region spans residues 170–200; sequence LQKKKKEKRQQKDDAALNRLEEDLKREAERL. Glutamate 285 (proton donor) is an active-site residue.

This sequence belongs to the HPF1 family. As to quaternary structure, interacts with PARP1 (via the PARP catalytic domain). Interacts with PARP2 (via the PARP catalytic domain). Interacts with core nucleosomes in a parp1- and parp2-dependent manner. In adult, mainly expressed in gonads.

The protein resides in the chromosome. It is found in the nucleus. Its function is as follows. Cofactor for serine ADP-ribosylation that confers serine specificity on parp1 and parp2 and plays a key role in DNA damage response. Initiates the repair of double-strand DNA breaks: recruited to DNA damage sites by parp1 and parp2 and switches the amino acid specificity of parp1 and parp2 from aspartate or glutamate to serine residues, licensing serine ADP-ribosylation of target proteins. Serine ADP-ribosylation of target proteins, such as histones, promotes decompaction of chromatin and the recruitment of repair factors leading to the reparation of DNA strand breaks. Serine ADP-ribosylation of proteins constitutes the primary form of ADP-ribosylation of proteins in response to DNA damage. Hpf1 acts by completing the active site of parp1 and parp2: forms a composite active site composed of residues from Hpf1 and parp1 or parp2. While hpf1 promotes the initiation of serine ADP-ribosylation, it restricts the polymerase activity of parp1 and parp2 in order to limit the length of poly-ADP-ribose chains. Hpf1 also promotes tyrosine ADP-ribosylation, probably by conferring tyrosine specificity on parp1. The sequence is that of Histone PARylation factor 1 from Danio rerio (Zebrafish).